Consider the following 453-residue polypeptide: MSQSPKVGFVSLGCPKALVDSEQIITQLRAEGYEISGTYDGADLVVVNTCGFIDEAVQESLDAIGEALTENGKVIVTGCLGAKKSASGSGLIEEVHPKVLAVTGPHAVGEVMQAVHSHLPKPHDPFVDLVPPAGIKLTPRHYAYLKISEGCNHRCTFCIIPSMRGDLVSRPVAEVMLEAENLFKSGVKELLVISQDTSAYGVDVKYRTGFWNGKPIKTRMTDLVAALGELAAQYGAWVRLHYVYPYPSVDEVIPLMAEGPFKGHVLPYLDVPFQHAHPDVLKRMKRPANAEKVLERVQKWREICPDLTIRSTFIAGFPGETEAQFETLLDFIREAELDRVGCFAYSPVEGASANELDGALPDDVREERRARFMEVAEEVSARRIARKVGKTLKVLIDEVSDEGGIGRTAADAPEIDGVVYVEPATKASKRYKVGDFVSVKITGADGHDLWGEV.

One can recognise an MTTase N-terminal domain in the interval 5–120 (PKVGFVSLGC…VMQAVHSHLP (116 aa)). [4Fe-4S] cluster is bound by residues cysteine 14, cysteine 50, cysteine 79, cysteine 151, cysteine 155, and cysteine 158. Residues 137–382 (LTPRHYAYLK…MEVAEEVSAR (246 aa)) enclose the Radical SAM core domain. Residues 385-453 (ARKVGKTLKV…ADGHDLWGEV (69 aa)) enclose the TRAM domain.

The protein belongs to the methylthiotransferase family. RimO subfamily. It depends on [4Fe-4S] cluster as a cofactor.

The protein resides in the cytoplasm. It catalyses the reaction L-aspartate(89)-[ribosomal protein uS12]-hydrogen + (sulfur carrier)-SH + AH2 + 2 S-adenosyl-L-methionine = 3-methylsulfanyl-L-aspartate(89)-[ribosomal protein uS12]-hydrogen + (sulfur carrier)-H + 5'-deoxyadenosine + L-methionine + A + S-adenosyl-L-homocysteine + 2 H(+). Catalyzes the methylthiolation of an aspartic acid residue of ribosomal protein uS12. This Burkholderia multivorans (strain ATCC 17616 / 249) protein is Ribosomal protein uS12 methylthiotransferase RimO.